Here is a 273-residue protein sequence, read N- to C-terminus: Putative carboxymethylenebutenolidase (273 aa).

Catalysis depends on residues cysteine 130, aspartate 191, and histidine 223.

The protein belongs to the dienelactone hydrolase family.

It carries out the reaction 2-(5-oxo-2,5-dihydrofuran-2-ylidene)acetate + H2O = 4-oxohex-2-enedioate + H(+). In Saccharomyces cerevisiae (strain ATCC 204508 / S288c) (Baker's yeast), this protein is Putative carboxymethylenebutenolidase.